Here is a 1230-residue protein sequence, read N- to C-terminus: Soluble starch synthase 3, chloroplastic/amyloplastic (1230 aa).

The N-terminal 60 residues, 1–60 (MDVPFPLHRSLSCTSVSNAITHLKIKPILGFVSHGTTSLSVQSSSWRKDGMVTGVSFSIC), are a transit peptide targeting the chloroplast. Positions 66-189 (RRRRKVSTPR…KDAVKLNKSK (124 aa)) are disordered. Basic and acidic residues predominate over residues 124–145 (VEARVETSDDDTKGVVRDHKFL). The span at 152–170 (NGSTKSISMSPVRVSSQFV) shows a compositional bias: polar residues. A compositionally biased stretch (basic and acidic residues) spans 177 to 189 (GDDKDAVKLNKSK). Lys794 is an ADP-alpha-D-glucose binding site.

The protein belongs to the glycosyltransferase 1 family. Bacterial/plant glycogen synthase subfamily. As to expression, tuber, sink and source leaves.

Its subcellular location is the plastid. The protein resides in the chloroplast. The protein localises to the amyloplast. The catalysed reaction is [(1-&gt;4)-alpha-D-glucosyl](n) + ADP-alpha-D-glucose = [(1-&gt;4)-alpha-D-glucosyl](n+1) + ADP + H(+). The protein operates within glycan biosynthesis; starch biosynthesis. Its function is as follows. May account for most of the soluble starch synthase activity in the tubers. Contributes only a tiny percentage of the granule-bound activity, but may also contribute to the deposition of transient starch in chloroplasts of leaves. This Solanum tuberosum (Potato) protein is Soluble starch synthase 3, chloroplastic/amyloplastic (SS3).